Here is a 948-residue protein sequence, read N- to C-terminus: MADSDDEYDRKRRDKFRGERSDSYRTERRDDRRPLGGSGSARDEWSDRNPFRGGASAGGGGGGARHRPDYSDYRGPGPRARYGSPGRDLPPAKRMRPDWGDGDVRPNPRFGGYDPYLMQAWNDHYQSIHSAYSHGSHMPPVRESGGSGGDSLTQPAMLNLKQFLDTQDENISDSEVMRKYTEYKTDFKRQQLNEFFVAHKDEEWFKNKYHPEDSVRRAEEQRGFLKRRTDVFVELLENGTIGSVKVDSVQGDALIRVLDTCVIKLEGGTDEDLKALDEKPKETPVYERKHDPAPVKAVDEVKSPKKETEKEASPVIVSPQRKSVKPLNSDDENWDEEVAAPPKKDVEEEPKALESGSEDKSRRKKSAKRKRVNSGDDSSSESDSSSSSDDEDEEKLKKKYDVEDGLRSEQKAEAEKDKEMQDAKVIEAPESPKEATENSAEEVKASDAAETPAEEAEQEKPEVAEEVNRPKQDQENGDKITTEDGETKSDSEENKVMETETIDLDKVRDGQPRALHRTSSIFLRNLAPSITKAEIEAVCTRFSGYLRVAIADPLVERRWYRRGWITFTRDVNIKEICWSLNNQRLRDCEMGAIVNRDLSRRVRPANGITAHKQVVRSDIKLCAKIILNLDERFRLWPEPTSDDSIPFDRAGESSANGNTSTYGIKSKNPVLQNITDYLIEEASAEEEELLGLTGENKDAEGEPIERDEHLLAVLDRLVLYLRIVHSVDYYNHCEYPYEDEMPNRCGIIHARGPAPSRVTSNDIHEYVKTYESKLQQFLTKTALLSDEETKDLGAKDAETEVEKFVQANTQELAKDKWLCPLSGKKFKGPEFIRKHIFNKHEEKVDEVRKEVQYFNNYLRDPKRPQLPEHPGSSKRPESESGRGGGSGYRPPMYPPFSGMPYGFSPSMMGGGRGGRNFPPVRRELPLEHQRRLIGYHDLDAPANSDMFD.

Disordered stretches follow at residues 1-106 (MADS…DVRP) and 274-497 (KALD…NKVM). 2 stretches are compositionally biased toward basic and acidic residues: residues 8-34 (YDRK…DRRP) and 41-50 (ARDEWSDRNP). Tyr82 is subject to Phosphotyrosine. Ser84 carries the phosphoserine modification. 2 stretches are compositionally biased toward basic and acidic residues: residues 95 to 106 (MRPDWGDGDVRP) and 274 to 312 (KALD…EKEA). The residue at position 329 (Ser329) is a Phosphoserine. A compositionally biased stretch (acidic residues) spans 329-338 (SDDENWDEEV). Residues 342–361 (PKKDVEEEPKALESGSEDKS) are compositionally biased toward basic and acidic residues. The span at 362–372 (RRKKSAKRKRV) shows a compositional bias: basic residues. 2 stretches are compositionally biased toward basic and acidic residues: residues 394–447 (EKLK…KASD) and 458–497 (QEKP…NKVM). A Phosphoserine modification is found at Ser431. At Ser644 the chain carries Phosphoserine. Positions 856–893 (NYLRDPKRPQLPEHPGSSKRPESESGRGGGSGYRPPMY) are disordered.

It belongs to the ARS2 family. As to quaternary structure, interacts with cbp20, Dcr-2 and pasha.

It is found in the nucleus. Its function is as follows. Acts as a mediator between the cap-binding complex (CBC) and RNA-mediated gene silencing (RNAi). Involved in innate immunity via the short interfering RNAs (siRNAs) processing machinery by restricting the viral RNA production. Also involved microRNA (miRNA)-mediated silencing by contributing to the stability and delivery of primary miRNA transcripts to the primary miRNA processing complex containing drosha and pasha. The protein is Serrate RNA effector molecule homolog (Ars2) of Drosophila ananassae (Fruit fly).